The primary structure comprises 140 residues: Protein PsiE homolog (140 aa).

Transmembrane regions (helical) follow at residues 16–36 (IVLQYILNVALICLGVVLSVF), 57–77 (YHLIDSIVVFFLYFEFIVMII), 85–105 (HFPLRYFIYIGITAIVRLIII), and 110–130 (PLDLLLYACAIFVLISALFIA).

It belongs to the PsiE family.

Its subcellular location is the cell membrane. This chain is Protein PsiE homolog, found in Bacillus cereus (strain ATCC 14579 / DSM 31 / CCUG 7414 / JCM 2152 / NBRC 15305 / NCIMB 9373 / NCTC 2599 / NRRL B-3711).